We begin with the raw amino-acid sequence, 348 residues long: MSVPTTQKAVVFESNGGPLLYKDIPVPTPKPNEILINVKYSGVCHTDLHAWKGDWPLDTKLPLVGGHEGAGVVVGIGSNVTGWELGDYAGIKWLNGSCLNCEFCQHSDEPNCAKADLSGYTHDGSFQQYATADAVQAARLPKGTDLAQAAPILCAGITVYKALKTAQIQPGNWVCISGAGGGLGSLAIQYAKAMGFRVIAIDGGEEKGEFVKSLGAEAYVDFTVSKDIVKDIQTATDGGPHAAINVSVSEKAIAQSCQYVRSTGTVVLVGLPAGAKVVAPVFDAVVKSISIRGSYVGNRADSAEAIDFFTRGLIKCPIKVVGLSELPKVYELMEAGKVIGRYVVDTSK.

Positions 44, 67, 98, 101, 104, 112, and 154 each coordinate Zn(2+). Residues 178–184 (GAGGGLG), Asp-202, Lys-207, 269–271 (VGL), and Arg-341 each bind NAD(+).

The protein belongs to the zinc-containing alcohol dehydrogenase family. Homotetramer. It depends on Zn(2+) as a cofactor.

The protein localises to the cytoplasm. The catalysed reaction is a primary alcohol + NAD(+) = an aldehyde + NADH + H(+). The enzyme catalyses a secondary alcohol + NAD(+) = a ketone + NADH + H(+). Its function is as follows. Converts ethanol to acetaldehyde and plays a major role in xylose fermentation. The protein is Alcohol dehydrogenase 1 (ADH1) of Scheffersomyces stipitis (strain ATCC 58785 / CBS 6054 / NBRC 10063 / NRRL Y-11545) (Yeast).